The primary structure comprises 6269 residues: Nonribosomal peptide synthetase 1 (6269 aa).

The interval 249-781 (ENDWSRVCSF…VSGKLDRKSI (533 aa)) is adenylation 1. The 77-residue stretch at 803–879 (RAANSTEDQL…ELATRVKGVT (77 aa)) folds into the Carrier 1 domain. O-(pantetheine 4'-phosphoryl)serine is present on Ser840. Positions 894 to 1342 (LSPIQKLHFM…TLSDFPMLSL (449 aa)) are epimerase 1. A condensation 1 region spans residues 1373–1775 (SRMQQGILLS…FLQSLENIIH (403 aa)). The interval 1725-2333 (HDPAEFPVYV…TGLLDRWFLR (609 aa)) is adenylation 2. The disordered stretch occupies residues 2364 to 2386 (KPSPSQLLPSSTSATHRSSGTST). Positions 2367 to 2376 (PSQLLPSSTS) are enriched in low complexity. Positions 2377–2386 (ATHRSSGTST) are enriched in polar residues. Residues 2597–2670 (WRKYLADVES…TGSEEVCYGY (74 aa)) form a condensation 2 region. The adenylation 3 stretch occupies residues 2845–3368 (RCAHEIIEQQ…SGKLDRKKLR (524 aa)). The region spanning 3392–3468 (ASDEGVEGTL…NMAKRCGMLQ (77 aa)) is the Carrier 2 domain. Residue Ser3429 is modified to O-(pantetheine 4'-phosphoryl)serine. The segment at 3512 to 3898 (CSPVQEGLLT…GQFSFVLEQL (387 aa)) is condensation 3. The segment at 3919 to 4454 (DSKEVALWNK…VSGKLDRKKI (536 aa)) is adenylation 4. The 77-residue stretch at 4487–4563 (EDKSTAAKIL…ELIQAAEVET (77 aa)) folds into the Carrier 3 domain. Ser4524 carries the O-(pantetheine 4'-phosphoryl)serine modification. The epimerase 2 stretch occupies residues 4578-5024 (LSPIQNLYFK…DFPLLPITYD (447 aa)). Residues 5052–5466 (SSVQEGILLS…PSQLVSELDL (415 aa)) form a condensation 4 region. One can recognise a Carrier 4 domain in the interval 5552–5628 (SKLMEPEKRL…DMLAAISASN (77 aa)). At Ser5589 the chain carries O-(pantetheine 4'-phosphoryl)serine. Residues 5628 to 5658 (NSSSALEPDSPADSNNEKPAEPPRLVELERN) form a disordered region. Basic and acidic residues predominate over residues 5642 to 5657 (NNEKPAEPPRLVELER). The interval 5720–6067 (FFFDGRGSLD…SSSDGKLGVS (348 aa)) is condensation 5. The region spanning 6139 to 6220 (SDILVHSDVV…GQMAVLTLHN (82 aa)) is the Carrier 5 domain.

It belongs to the NRP synthetase family. Post-translationally, the thiolation domains are 4'-phosphopantetheinylated.

Functionally, nonribosomal peptide synthesis (NRPS) is a key mechanism responsible for the biosynthesis of bioactive metabolites which are potentially contributing to organismal virulence. Contributes to improved fungal tolerance against oxidative stress, during the infection process. The chain is Nonribosomal peptide synthetase 1 (NRPS1) from Aspergillus fumigatus (strain ATCC MYA-4609 / CBS 101355 / FGSC A1100 / Af293) (Neosartorya fumigata).